The sequence spans 348 residues: Protein RecA (348 aa).

Residue 65-72 (GPESSGKT) coordinates ATP.

This sequence belongs to the RecA family.

It localises to the cytoplasm. Its function is as follows. Can catalyze the hydrolysis of ATP in the presence of single-stranded DNA, the ATP-dependent uptake of single-stranded DNA by duplex DNA, and the ATP-dependent hybridization of homologous single-stranded DNAs. It interacts with LexA causing its activation and leading to its autocatalytic cleavage. This is Protein RecA from Enterococcus gallinarum.